The primary structure comprises 173 residues: Ribosome maturation factor RimM (173 aa).

A PRC barrel domain is found at Glu95–Leu169.

Belongs to the RimM family. Binds ribosomal protein uS19.

Its subcellular location is the cytoplasm. An accessory protein needed during the final step in the assembly of 30S ribosomal subunit, possibly for assembly of the head region. Essential for efficient processing of 16S rRNA. May be needed both before and after RbfA during the maturation of 16S rRNA. It has affinity for free ribosomal 30S subunits but not for 70S ribosomes. This chain is Ribosome maturation factor RimM, found in Lactobacillus gasseri (strain ATCC 33323 / DSM 20243 / BCRC 14619 / CIP 102991 / JCM 1131 / KCTC 3163 / NCIMB 11718 / NCTC 13722 / AM63).